An 887-amino-acid polypeptide reads, in one-letter code: Cadherin-1 (887 aa).

Residues 1-26 (MGRRWGSPALQRFPVLVLLLLLQVCG) form the signal peptide. The propeptide occupies 27-160 (RRCDEAAPCQ…DPGFLRRQKR (134 aa)). Cadherin domains are found at residues 161–268 (DWVI…KPVF), 269–381 (IKEV…IPIF), 382–493 (NPTM…PPVF), 494–599 (VPPI…DNGP), and 600–704 (TPEP…RRSY). At 161 to 714 (DWVIPPISCL…IVGGLGVPAI (554 aa)) the chain is on the extracellular side. A Ca(2+)-binding site is contributed by aspartate 263. An N-linked (GlcNAc...) asparagine glycan is attached at asparagine 291. Ca(2+) is bound at residue aspartate 294. Residue asparagine 346 is glycosylated (N-linked (GlcNAc...) asparagine). N-linked (GlcNAc...) asparagine glycans are attached at residues asparagine 564 and asparagine 643. Residues 715–735 (LGILGGILALLILLLLLLLFA) traverse the membrane as a helical segment. Residues 736 to 887 (RRRKVEKEPL…ELYGGGEDDE (152 aa)) lie on the Cytoplasmic side of the membrane. Residues 745–770 (LLPPEDDMRDNVYNYDEEGGGEEDQD) form a disordered region. Residues 759-770 (YDEEGGGEEDQD) are compositionally biased toward acidic residues.

In terms of assembly, homodimer. Interacts with CTNNA2. As to expression, expressed in the liver.

The protein resides in the cell junction. It localises to the adherens junction. It is found in the cell membrane. The protein localises to the endosome. Its subcellular location is the golgi apparatus. The protein resides in the trans-Golgi network. It localises to the cytoplasm. It is found in the desmosome. Functionally, cadherins are calcium-dependent cell adhesion proteins. They preferentially interact with themselves in a homophilic manner in connecting cells; cadherins may thus contribute to the sorting of heterogeneous cell types. Promotes organization of radial actin fiber structure and cellular response to contractile forces, via anchoring of radial actin fibers to CDH1 junction complexes at the cell membrane. E-cadherin is a ligand for integrin alpha-E/beta-7. The sequence is that of Cadherin-1 (CDH1) from Gallus gallus (Chicken).